Consider the following 799-residue polypeptide: MTSESPTNYDGIDSRIDTVADRVGSVWPLHSFVTANPLSGFEGSPFEDAVAEGERLFGGRGYPRADIFRRAWEDGRIDDDALRTELERRGIERDPETLLEAMETAETKRDDDPDDATAAVDRVLSKWLAAYLDQGQAPWPMPNREEGFYSAWRAVAPYDSDVPGCDDTEDVPATATGAVETVLDAYPRRRWDSIIEHHLAALPGWTGFIKQRADDEFDPWQSEYPITLTEYLGVRLTLVDLLDAPVAPETDADAGDETTAVREAWLSAWEQSYREHLLEDVDDDVTESSHGNGKRPAAQLVFCIDTRSEIIRRHIEQQGPYETHGYAGFFGVPMRHEAYGSDVTTEACPPIVEPEHIIADRPDAHHAEQETAHNRWHGLVSAARKHFKRLKTNPVAAFPFVEGAGSAYGSAMALRTLLPSAVYKLGSTVDEHVPSSHEFCSPTLDRPRMTHEEKVEYAQTAFELMGWTEFARLVVFTGHTSHTTNNPFDSSLQCGACAGNPGGPNARVLAKICNDEAVKDDLRERGVDIPDDTVFVGAEHNTTTDEITLFDGEVPKSHHADVAALRDSLEQARAGAAAERSEALNGADPDKGVSETASRAADWAQTRPEWGLAGNASFVIGPRELTADSDLDGRAFLHSYDWTTDPDGDALELIMLGPLVVTQWINNQYYFATVDNRVYGSGSKVTQNPVGNIGVVQGNGGDLMMGLPLQSLMSDDDSPYHQPLRLTAVIHASVENVTDILREHGHVRRLVDNGWVGNLTVVDPTRDNAAFDYVGGLEWEPSVQQDASSERVAAPAASD.

The Zn(2+) site is built by Cys-303, Asp-305, His-479, and Cys-494. The segment at 574–598 is disordered; sequence AGAAAERSEALNGADPDKGVSETAS.

This sequence belongs to the inorganic carbon transporter (TC 9.A.2) DabA family. Forms a complex with DabB. Requires Zn(2+) as cofactor.

It is found in the cell membrane. Functionally, part of an energy-coupled inorganic carbon pump. This chain is Probable inorganic carbon transporter subunit DabA, found in Natronomonas pharaonis (strain ATCC 35678 / DSM 2160 / CIP 103997 / JCM 8858 / NBRC 14720 / NCIMB 2260 / Gabara) (Halobacterium pharaonis).